A 447-amino-acid polypeptide reads, in one-letter code: Probable protein phosphatase 2C 71 (447 aa).

Residues 33–279 enclose the PPM-type phosphatase domain; the sequence is SYGYASSAGK…DNITCVVVRF (247 aa). Residues aspartate 69, glycine 70, aspartate 231, and aspartate 270 each coordinate Mn(2+). Residues 284–297 show a composition bias toward low complexity; the sequence is SANNNGSSSSEEAN. The interval 284 to 447 is disordered; that stretch reads SANNNGSSSS…ARKTTPSIFN (164 aa). Positions 305-331 are enriched in basic and acidic residues; that stretch reads NDSDHKISAKETNQDHTTVNKDLDRNT. Composition is skewed to polar residues over residues 346–374 and 392–423; these read ADNS…TGEK and KVPN…GSTG. The span at 424–438 shows a compositional bias: basic and acidic residues; it reads ERNRKPIKVHSDSAA.

It belongs to the PP2C family. Mg(2+) is required as a cofactor. Mn(2+) serves as cofactor.

The enzyme catalyses O-phospho-L-seryl-[protein] + H2O = L-seryl-[protein] + phosphate. It carries out the reaction O-phospho-L-threonyl-[protein] + H2O = L-threonyl-[protein] + phosphate. The sequence is that of Probable protein phosphatase 2C 71 from Arabidopsis thaliana (Mouse-ear cress).